Here is a 616-residue protein sequence, read N- to C-terminus: MTALEKLAKLRSLFHSERVLALTSSKPMVAYLLPSTDAHHSEYLADYDFRVKFLSGFSGSNAYVVVTDREALLWTDGRYFTQAGNQLDSNSWKLMKQGQPDSITVVDWLVRELERGSVIGFDPTLSTFDAGSKTFKRLKAAGLQPVSIPGNLVDEFWTDRPRLAGEPVVVLDVEDTGLTTSKKVENLREKLKQKKCDAAVFTLLDDVMWLLNIRGSDIPYNPLAYSYLFVAMREIHVFIDNEKLDEKSRAHFHKSNVSIHPYGEVYSWISNWLKAKEASKEPHMVYLTPETNYAIGSIIGEENSMVDTSLVQTAKATKNDHEMQGMRNSHLRDSAALVEFLCWLEKELLSGKRYTEIELADKIDHLRSLQDKYVTLSFDTISAVGDHAALPHYKPLGESGNRKAAANQVFLLDSGAHYGDGTTDVTRTVWYTNPPKEFILHNTLVLKGHINLARAKFPDGIYGSRLDTLTRDALWKLGLDFEHGTGHGVGHYLNVHEGPIGIGHRSVPTGGELHASQVLTIEPGFYAKEKYGIRIENCYETVEAVVMSKAQNFLTFKSLTLVPIQTSIVDKSLLIEEEINWLNQYHARVLKEVGEHLQKRGKTDELKWLAEACKPI.

2 residues coordinate a peptide: R78 and H392. Zn(2+)-binding residues include D413, D424, and H487. Residues H487, H496, and E522 each coordinate a peptide. Residues E522 and E536 each coordinate Zn(2+).

Belongs to the peptidase M24B family. In terms of assembly, homodimer. May interact with pid-2, pid-4 and pid-5. It depends on Zn(2+) as a cofactor. As to expression, specifically expressed in the intestine.

The protein resides in the cytoplasm. The enzyme catalyses Release of any N-terminal amino acid, including proline, that is linked to proline, even from a dipeptide or tripeptide.. Strongly inhibited by the metal ion chelators EDTA and 1,10-phenanthroline. Also inhibited by apstatin. Activity towards bradykinin is inhibited by Mn(2+) and Zn(2+) at all concentrations tested, whereas Co(2+) is inhibitory at concentrations above 100 uM and activatory at 10 uM. Its function is as follows. Catalyzes the removal of a penultimate prolyl residue from the N-termini of peptides, such as Arg-Pro-Pro. Has activity towards the flp-9 neuropeptide KPSFVRF-amide. This is Xaa-Pro aminopeptidase app-1 from Caenorhabditis elegans.